Here is a 574-residue protein sequence, read N- to C-terminus: Proline--tRNA ligase (574 aa).

The protein belongs to the class-II aminoacyl-tRNA synthetase family. ProS type 1 subfamily. Homodimer.

Its subcellular location is the cytoplasm. The enzyme catalyses tRNA(Pro) + L-proline + ATP = L-prolyl-tRNA(Pro) + AMP + diphosphate. Catalyzes the attachment of proline to tRNA(Pro) in a two-step reaction: proline is first activated by ATP to form Pro-AMP and then transferred to the acceptor end of tRNA(Pro). As ProRS can inadvertently accommodate and process non-cognate amino acids such as alanine and cysteine, to avoid such errors it has two additional distinct editing activities against alanine. One activity is designated as 'pretransfer' editing and involves the tRNA(Pro)-independent hydrolysis of activated Ala-AMP. The other activity is designated 'posttransfer' editing and involves deacylation of mischarged Ala-tRNA(Pro). The misacylated Cys-tRNA(Pro) is not edited by ProRS. The protein is Proline--tRNA ligase of Nitratidesulfovibrio vulgaris (strain DP4) (Desulfovibrio vulgaris).